A 305-amino-acid polypeptide reads, in one-letter code: Ribonuclease Z (305 aa).

Zn(2+) contacts are provided by histidine 63, histidine 65, aspartate 67, histidine 68, histidine 142, aspartate 209, and histidine 267. Residue aspartate 67 is the Proton acceptor of the active site.

It belongs to the RNase Z family. Homodimer. Zn(2+) serves as cofactor.

It catalyses the reaction Endonucleolytic cleavage of RNA, removing extra 3' nucleotides from tRNA precursor, generating 3' termini of tRNAs. A 3'-hydroxy group is left at the tRNA terminus and a 5'-phosphoryl group is left at the trailer molecule.. Functionally, zinc phosphodiesterase, which displays some tRNA 3'-processing endonuclease activity. Probably involved in tRNA maturation, by removing a 3'-trailer from precursor tRNA. This Nocardia farcinica (strain IFM 10152) protein is Ribonuclease Z.